The sequence spans 459 residues: Interleukin-7 receptor subunit alpha (459 aa).

An N-terminal signal peptide occupies residues 1-20; the sequence is MTILGTTFGVFFSLLQVVSG. The Extracellular portion of the chain corresponds to 21-241; it reads ESGYAQNGDL…NNHSGETNPT (221 aa). Cys42 and Cys57 are disulfide-bonded. 2 N-linked (GlcNAc...) asparagine glycosylation sites follow: Asn49 and Asn65. Disulfide bonds link Cys74–Cys82 and Cys108–Cys118. In terms of domain architecture, Fibronectin type-III spans 131-231; it reads APFDLSVIYR…PSYYFRTPEI (101 aa). Asn182 is a glycosylation site (N-linked (GlcNAc...) asparagine). Residues 217-221 carry the WSXWS motif motif; sequence WSEWS. The chain crosses the membrane as a helical span at residues 242–262; the sequence is LLTISILSVLSVVLLVILACV. Topologically, residues 263–459 are cytoplasmic; sequence LWKKRIKPII…VTMSSFCQKR (197 aa). The Box 1 motif motif lies at 272–280; the sequence is IWPSLPDHK. At Thr282 the chain carries Phosphothreonine; by PKC. Residues 327 to 357 form a disordered region; that stretch reads TVPPQLEESETQRPGGDVQSPSWPSENVVTT. The segment covering 345–357 has biased composition (polar residues); that stretch reads QSPSWPSENVVTT.

This sequence belongs to the type I cytokine receptor family. Type 4 subfamily. The IL7 receptor is a heterodimer of IL7R and IL2RG. The TSLP receptor is a heterodimer of CRLF2 and IL7R. Interacts with CD53. In terms of processing, N-glycosylated IL-7Ralpha binds IL7 300-fold more tightly than the unglycosylated form. Post-translationally, ubiquitinated by MARCHF8; leading to lysosomal degradation.

The protein resides in the cell membrane. Receptor for interleukin-7. Also acts as a receptor for thymic stromal lymphopoietin (TSLP). The sequence is that of Interleukin-7 receptor subunit alpha (IL7R) from Callithrix jacchus (White-tufted-ear marmoset).